The following is a 75-amino-acid chain: Putative antitoxin PH1062.1 (75 aa).

The protein belongs to the UPF0330 family.

Its function is as follows. Possibly the antitoxin component of a type II toxin-antitoxin (TA) system. The protein is Putative antitoxin PH1062.1 of Pyrococcus horikoshii (strain ATCC 700860 / DSM 12428 / JCM 9974 / NBRC 100139 / OT-3).